A 441-amino-acid polypeptide reads, in one-letter code: Probable glycine dehydrogenase (decarboxylating) subunit 1 (441 aa).

Belongs to the GcvP family. N-terminal subunit subfamily. As to quaternary structure, the glycine cleavage system is composed of four proteins: P, T, L and H. In this organism, the P 'protein' is a heterodimer of two subunits.

The catalysed reaction is N(6)-[(R)-lipoyl]-L-lysyl-[glycine-cleavage complex H protein] + glycine + H(+) = N(6)-[(R)-S(8)-aminomethyldihydrolipoyl]-L-lysyl-[glycine-cleavage complex H protein] + CO2. Functionally, the glycine cleavage system catalyzes the degradation of glycine. The P protein binds the alpha-amino group of glycine through its pyridoxal phosphate cofactor; CO(2) is released and the remaining methylamine moiety is then transferred to the lipoamide cofactor of the H protein. In Halobacterium salinarum (strain ATCC 700922 / JCM 11081 / NRC-1) (Halobacterium halobium), this protein is Probable glycine dehydrogenase (decarboxylating) subunit 1.